The primary structure comprises 486 residues: Adenylate kinase 8 (486 aa).

Adenylate kinase regions lie at residues 58–258 (PRII…NFIC) and 269–471 (PRIL…SRLV). 67–72 (ASGKKT) is an ATP binding site. Residues 87–112 (TFCDILKDDSDLTRAAQSYYDKKQNV) are NMP 1. AMP is bound by residues 139–142 (AIPK) and Arg-202. The tract at residues 176 to 205 (GKRIDPVTGDVYHVTFMWPESEEVAQRLET) is LID 1. ATP is bound at residue 278–283 (GAGRNL). The segment at 298–327 (CCGELLKAVSADESHMGELIKPYLESEQQV) is NMP 2. Residues 325-327 (QQV) and 354-357 (GFPR) contribute to the AMP site. The interval 391–424 (LRAVDPVTGEWYHSVYKPPPGPEVQARLRFNPQH) is LID 2. An ATP-binding site is contributed by Arg-392. Residue Arg-432 participates in AMP binding.

It belongs to the adenylate kinase family.

It is found in the cytoplasm. Its subcellular location is the cytosol. The enzyme catalyses AMP + ATP = 2 ADP. It catalyses the reaction a 2'-deoxyribonucleoside 5'-diphosphate + ATP = a 2'-deoxyribonucleoside 5'-triphosphate + ADP. The catalysed reaction is a ribonucleoside 5'-diphosphate + ATP = a ribonucleoside 5'-triphosphate + ADP. Its function is as follows. Nucleoside monophosphate (NMP) kinase that catalyzes the reversible transfer of the terminal phosphate group between nucleoside triphosphates and monophosphates. Has highest activity toward AMP, and weaker activity toward dAMP, CMP and dCMP. Also displays broad nucleoside diphosphate kinase activity. The chain is Adenylate kinase 8 (ak8) from Danio rerio (Zebrafish).